We begin with the raw amino-acid sequence, 329 residues long: GTPase Obg (329 aa).

The Obg domain occupies 1–159 (MQFIDQACIS…WLLHLELKLL (159 aa)). Residues 160–328 (AEVGIIGLPN…LLKNVWEKLE (169 aa)) enclose the OBG-type G domain. ATP is bound by residues 166-173 (GLPNAGKS), 191-195 (FTTLI), 213-216 (DIPG), 280-283 (NKKE), and 309-311 (SAA). Mg(2+) contacts are provided by Ser173 and Thr193.

It belongs to the TRAFAC class OBG-HflX-like GTPase superfamily. OBG GTPase family. In terms of assembly, monomer. Mg(2+) is required as a cofactor.

Its subcellular location is the cytoplasm. In terms of biological role, an essential GTPase which binds GTP, GDP and possibly (p)ppGpp with moderate affinity, with high nucleotide exchange rates and a fairly low GTP hydrolysis rate. Plays a role in control of the cell cycle, stress response, ribosome biogenesis and in those bacteria that undergo differentiation, in morphogenesis control. This is GTPase Obg from Prochlorococcus marinus (strain MIT 9211).